We begin with the raw amino-acid sequence, 202 residues long: Imidazoleglycerol-phosphate dehydratase (202 aa).

Belongs to the imidazoleglycerol-phosphate dehydratase family.

The protein localises to the cytoplasm. It carries out the reaction D-erythro-1-(imidazol-4-yl)glycerol 3-phosphate = 3-(imidazol-4-yl)-2-oxopropyl phosphate + H2O. The protein operates within amino-acid biosynthesis; L-histidine biosynthesis; L-histidine from 5-phospho-alpha-D-ribose 1-diphosphate: step 6/9. The protein is Imidazoleglycerol-phosphate dehydratase of Rhizobium etli (strain ATCC 51251 / DSM 11541 / JCM 21823 / NBRC 15573 / CFN 42).